The chain runs to 216 residues: Serine acetyltransferase (216 aa).

This sequence belongs to the transferase hexapeptide repeat family.

It is found in the cytoplasm. The catalysed reaction is L-serine + acetyl-CoA = O-acetyl-L-serine + CoA. The protein operates within amino-acid biosynthesis; L-cysteine biosynthesis; L-cysteine from L-serine: step 1/2. Inhibited by cysteine. Catalyzes the acetylation of serine by acetyl-CoA to produce O-acetylserine (OAS). The polypeptide is Serine acetyltransferase (Bacillus licheniformis (strain ATCC 14580 / DSM 13 / JCM 2505 / CCUG 7422 / NBRC 12200 / NCIMB 9375 / NCTC 10341 / NRRL NRS-1264 / Gibson 46)).